The sequence spans 345 residues: 2-oxoglutarate-dependent ethylene/succinate-forming enzyme (345 aa).

In terms of domain architecture, Fe2OG dioxygenase spans 167–288 (GWHHMRVLRF…RFAMAYFHEP (122 aa)). Residues histidine 191 and histidine 270 each contribute to the Fe cation site.

It belongs to the iron/ascorbate-dependent oxidoreductase family. As to quaternary structure, monomer. The cofactor is Fe(2+).

The catalysed reaction is 2-oxoglutarate + O2 + 2 H(+) = ethene + 3 CO2 + H2O. The enzyme catalyses L-arginine + 2-oxoglutarate + O2 = guanidine + L-glutamate 5-semialdehyde + succinate + CO2. It participates in alkene biosynthesis; ethylene biosynthesis via 2-oxoglutarate. Functionally, simultaneously catalyzes two reactions, namely formation of ethylene and of succinate from 2-oxoglutarate. The polypeptide is 2-oxoglutarate-dependent ethylene/succinate-forming enzyme (efe) (Ralstonia nicotianae (strain ATCC BAA-1114 / GMI1000) (Ralstonia solanacearum)).